We begin with the raw amino-acid sequence, 145 residues long: 3-dehydroquinate dehydratase (145 aa).

Tyrosine 24 (proton acceptor) is an active-site residue. Residues asparagine 76, histidine 82, and aspartate 89 each coordinate substrate. Histidine 102 serves as the catalytic Proton donor. Residues 103 to 104 (VS) and arginine 113 each bind substrate.

It belongs to the type-II 3-dehydroquinase family. In terms of assembly, homododecamer.

It catalyses the reaction 3-dehydroquinate = 3-dehydroshikimate + H2O. The protein operates within metabolic intermediate biosynthesis; chorismate biosynthesis; chorismate from D-erythrose 4-phosphate and phosphoenolpyruvate: step 3/7. Catalyzes a trans-dehydration via an enolate intermediate. The polypeptide is 3-dehydroquinate dehydratase (Herminiimonas arsenicoxydans).